The following is a 588-amino-acid chain: Histone deacetylase 9 (588 aa).

The residue at position 22 (Ser-22) is a Phosphoserine. The interaction with CTBP1 stretch occupies residues 23–27 (PLDLR). A compositionally biased stretch (basic and acidic residues) spans 110–147 (RQEQEVERHRREQQLPPLRGKDRGRERAVASTEVKQKL). Disordered stretches follow at residues 110–170 (RQEQ…HSVG), 183–242 (TSLD…SSPL), and 264–301 (SSVSSSSPGSGPSSPNNGPAGNVTENEASALPPTPHPE). Residues 136 to 154 (RAVASTEVKQKLQEFLLSK) are interaction with MEF2. Composition is skewed to polar residues over residues 154 to 166 (KSATKDTPTNGKN) and 185 to 199 (LDQSSPPLSGTSPSY). The segment at 175–343 (LWYTAAHHTS…LPAVPSPLNA (169 aa)) is interaction with MAPK10. Residues 208-219 (DSKDDFPLRKTA) show a composition bias toward basic and acidic residues. The interaction with ETV6 stretch occupies residues 218–261 (TASEPNLKVRSRLKQKVAERRSSPLLRRKDGNLVTSFKKRVFEV). Residue Ser-220 is modified to Phosphoserine. The segment covering 233–242 (KVAERRSSPL) has biased composition (basic and acidic residues). Ser-240 carries the phosphoserine; by DYRK1B modification. Residues 264–284 (SSVSSSSPGSGPSSPNNGPAG) show a composition bias toward low complexity. Residue Ser-450 is modified to Phosphoserine. Positions 493–533 (QLKQPGSHLEEAEEELQGDQSMEDRAASKDNSARSDSSACV) are disordered. A compositionally biased stretch (basic and acidic residues) spans 514-525 (MEDRAASKDNSA). Ser-552 bears the Phosphoserine mark.

Belongs to the histone deacetylase family. HD type 2 subfamily. As to quaternary structure, homodimer. Interacts with ETV6. Interacts with MEF2, HDAC1, HDAC3, HDAC4, HDAC5, CTBP1 and MAPK10. The phosphorylated form interacts with 14-3-3. Interacts with FOXP3 in the absence of T-cell stimulation. Post-translationally, sumoylated. In terms of processing, phosphorylated on Ser-220 and Ser-450; which promotes 14-3-3-binding, impairs interaction with MEF2, and antagonizes antimyogenic activity. Phosphorylated on Ser-240 by DYRK1B; which impairs nuclear accumulation. Phosphorylated by the PKC kinases PKN1 and PKN2, impairing nuclear import. Expressed at high levels in heart, brain and spleen. Expressed in skeletal muscle.

It is found in the nucleus. The enzyme catalyses N(6)-acetyl-L-lysyl-[histone] + H2O = L-lysyl-[histone] + acetate. Devoided of intrinsic deacetylase activity, promotes the deacetylation of lysine residues on the N-terminal part of the core histones (H2A, H2B, H3 and H4) by recruiting HDAC1 and HDAC3. Histone deacetylation gives a tag for epigenetic repression and plays an important role in transcriptional regulation, cell cycle progression and developmental events. Represses MEF2-dependent transcription, inhibits skeletal myogenesis and may be involved in heart development. Protects neurons from apoptosis, both by inhibiting JUN phosphorylation by MAPK10 and by repressing JUN transcription via HDAC1 recruitment to JUN promoter. This chain is Histone deacetylase 9 (Hdac9), found in Mus musculus (Mouse).